Reading from the N-terminus, the 465-residue chain is ATP synthase subunit beta (465 aa).

Residue G149–T156 coordinates ATP.

It belongs to the ATPase alpha/beta chains family. In terms of assembly, F-type ATPases have 2 components, CF(1) - the catalytic core - and CF(0) - the membrane proton channel. CF(1) has five subunits: alpha(3), beta(3), gamma(1), delta(1), epsilon(1). CF(0) has three main subunits: a(1), b(2) and c(9-12). The alpha and beta chains form an alternating ring which encloses part of the gamma chain. CF(1) is attached to CF(0) by a central stalk formed by the gamma and epsilon chains, while a peripheral stalk is formed by the delta and b chains.

It is found in the cell inner membrane. It catalyses the reaction ATP + H2O + 4 H(+)(in) = ADP + phosphate + 5 H(+)(out). Functionally, produces ATP from ADP in the presence of a proton gradient across the membrane. The catalytic sites are hosted primarily by the beta subunits. The polypeptide is ATP synthase subunit beta (Dictyoglomus turgidum (strain DSM 6724 / Z-1310)).